The primary structure comprises 411 residues: Methylthioribose-1-phosphate isomerase (411 aa).

S2 is modified (N-acetylserine). The active-site Proton donor is D280. S351 carries the phosphoserine modification.

It belongs to the eIF-2B alpha/beta/delta subunits family. MtnA subfamily. Homodimer.

It localises to the cytoplasm. Its subcellular location is the nucleus. It catalyses the reaction 5-(methylsulfanyl)-alpha-D-ribose 1-phosphate = 5-(methylsulfanyl)-D-ribulose 1-phosphate. It functions in the pathway amino-acid biosynthesis; L-methionine biosynthesis via salvage pathway; L-methionine from S-methyl-5-thio-alpha-D-ribose 1-phosphate: step 1/6. In terms of biological role, catalyzes the interconversion of methylthioribose-1-phosphate (MTR-1-P) into methylthioribulose-1-phosphate (MTRu-1-P). The sequence is that of Methylthioribose-1-phosphate isomerase from Saccharomyces cerevisiae (strain JAY291) (Baker's yeast).